A 274-amino-acid chain; its full sequence is 5'-3' exoribonuclease (274 aa).

Positions 8, 10, 15, 40, 65, 76, 190, 247, and 249 each coordinate Mn(2+).

The protein belongs to the PHP family. TrpH/YciV subfamily. Requires Mn(2+) as cofactor.

The enzyme catalyses a ribonucleoside 3',5'-bisphosphate + H2O = a ribonucleoside 5'-phosphate + phosphate. In terms of biological role, efficiently catalyzes the hydrolysis of the 3'-phosphate from 3',5'-bis-phosphonucleotides as well as the successive hydrolysis of 5'-phosphomononucleotides from the 5'-end of short pieces of RNA and DNA, with no specificity toward the identity of the nucleotide base. Is more efficient at hydrolyzing RNA oligonucleotides than DNA oligonucleotides. This enzyme can also hydrolyze annealed DNA duplexes, albeit at a catalytic efficiency lower than that of the corresponding single-stranded oligonucleotides. The chain is 5'-3' exoribonuclease from Haemophilus influenzae (strain ATCC 51907 / DSM 11121 / KW20 / Rd).